Reading from the N-terminus, the 300-residue chain is Zinc finger protein 705B (300 aa).

A KRAB domain is found at 7-78 (VTFEDVAIDF…GRVFLQDQNP (72 aa)). 3 consecutive C2H2-type zinc fingers follow at residues 172–194 (YQCNLCEKAYTNCFYLRRHKMTH), 200–222 (YACHLCGKAFTQCSHLRRHEKTH), and 228–250 (YKCHQCGKAFIQSFNLRRHERTH). Residues 256-278 (YECDKSGKAFSQSSGFRGNKIIH) form a C2H2-type 4; degenerate zinc finger.

The protein belongs to the krueppel C2H2-type zinc-finger protein family.

Its subcellular location is the nucleus. Its function is as follows. May be involved in transcriptional regulation. The sequence is that of Zinc finger protein 705B (ZNF705B) from Homo sapiens (Human).